A 1020-amino-acid polypeptide reads, in one-letter code: C2 and GRAM domain-containing protein At1g03370 (1020 aa).

A C2 1 domain is found at 1–102; sequence MKLQVRVVEA…ENQSLGTVWY (102 aa). Ca(2+) is bound by residues D17, D23, D69, D71, and D77. Polar residues-rich tracts occupy residues 134 to 144 and 158 to 172; these read TSSGDQTSASR and TCAS…SSIP. The tract at residues 134-172 is disordered; the sequence is TSSGDQTSASRSPDLRLESPIDPSTCASPSRSDDASSIP. In terms of domain architecture, VASt 1 spans 249-421; that stretch reads SGGVVVDQLF…LLAQSVKPVD (173 aa). Residues 454-474 traverse the membrane as a helical segment; the sequence is FTVLSTFLIGIYVFVHIVFAI. The 119-residue stretch at 517 to 635 folds into the C2 2 domain; sequence QARKQKGSDH…NISDLADVWV (119 aa). The Ca(2+) site is built by D551, D557, D604, F605, and D606. A GRAM domain is found at 689 to 752; it reads AFQKLFGLPQ…LWEDIEEIQV (64 aa). The VASt 2 domain maps to 848–1010; sequence RFSEVFSLTL…MTFGFLEKEY (163 aa).

It depends on Ca(2+) as a cofactor.

The protein resides in the membrane. The polypeptide is C2 and GRAM domain-containing protein At1g03370 (Arabidopsis thaliana (Mouse-ear cress)).